Reading from the N-terminus, the 616-residue chain is Dihydroxy-acid dehydratase (616 aa).

Asp-81 is a Mg(2+) binding site. Residue Cys-122 coordinates [2Fe-2S] cluster. The Mg(2+) site is built by Asp-123 and Lys-124. The residue at position 124 (Lys-124) is an N6-carboxylysine. Cys-195 serves as a coordination point for [2Fe-2S] cluster. Glu-491 contacts Mg(2+). Ser-517 acts as the Proton acceptor in catalysis.

This sequence belongs to the IlvD/Edd family. As to quaternary structure, homodimer. Requires [2Fe-2S] cluster as cofactor. The cofactor is Mg(2+).

It carries out the reaction (2R)-2,3-dihydroxy-3-methylbutanoate = 3-methyl-2-oxobutanoate + H2O. The enzyme catalyses (2R,3R)-2,3-dihydroxy-3-methylpentanoate = (S)-3-methyl-2-oxopentanoate + H2O. It participates in amino-acid biosynthesis; L-isoleucine biosynthesis; L-isoleucine from 2-oxobutanoate: step 3/4. Its pathway is amino-acid biosynthesis; L-valine biosynthesis; L-valine from pyruvate: step 3/4. Functionally, functions in the biosynthesis of branched-chain amino acids. Catalyzes the dehydration of (2R,3R)-2,3-dihydroxy-3-methylpentanoate (2,3-dihydroxy-3-methylvalerate) into 2-oxo-3-methylpentanoate (2-oxo-3-methylvalerate) and of (2R)-2,3-dihydroxy-3-methylbutanoate (2,3-dihydroxyisovalerate) into 2-oxo-3-methylbutanoate (2-oxoisovalerate), the penultimate precursor to L-isoleucine and L-valine, respectively. In Serratia proteamaculans (strain 568), this protein is Dihydroxy-acid dehydratase.